Reading from the N-terminus, the 492-residue chain is Probable endopolygalacturonase D (492 aa).

The signal sequence occupies residues 1-16 (MKRSALILSFLPLVFG). Residues C151 and C166 are joined by a disulfide bond. PbH1 repeat units lie at residues 216-238 (GTSV…AYWD), 258-280 (MYNS…EIES), 281-319 (TEHL…DIKE), and 320-341 (SSYF…AVTS). The N-linked (GlcNAc...) asparagine glycan is linked to N292. D334 acts as the Proton donor in catalysis. A disulfide bond links C336 and C352. H356 is an active-site residue. PbH1 repeat units follow at residues 371 to 392 (VNGV…RIKT), 400 to 422 (VYNI…DVQQ), and 434 to 478 (TNGV…SITG). N-linked (GlcNAc...) asparagine glycosylation is found at N407 and N441. Cystine bridges form between C461-C466 and C484-C491.

The protein belongs to the glycosyl hydrolase 28 family.

Its subcellular location is the secreted. It carries out the reaction (1,4-alpha-D-galacturonosyl)n+m + H2O = (1,4-alpha-D-galacturonosyl)n + (1,4-alpha-D-galacturonosyl)m.. In terms of biological role, involved in maceration and soft-rotting of plant tissue. Hydrolyzes the 1,4-alpha glycosidic bonds of de-esterified pectate in the smooth region of the plant cell wall. The sequence is that of Probable endopolygalacturonase D (pgaD) from Aspergillus oryzae (strain ATCC 42149 / RIB 40) (Yellow koji mold).